The following is a 160-amino-acid chain: Major allergen Pru ar 1 (160 aa).

It belongs to the BetVI family.

The protein is Major allergen Pru ar 1 of Prunus armeniaca (Apricot).